Consider the following 179-residue polypeptide: Large ribosomal subunit protein uL5 (179 aa).

It belongs to the universal ribosomal protein uL5 family. Part of the 50S ribosomal subunit; part of the 5S rRNA/L5/L18/L25 subcomplex. Contacts the 5S rRNA and the P site tRNA. Forms a bridge to the 30S subunit in the 70S ribosome.

This is one of the proteins that bind and probably mediate the attachment of the 5S RNA into the large ribosomal subunit, where it forms part of the central protuberance. In the 70S ribosome it contacts protein S13 of the 30S subunit (bridge B1b), connecting the 2 subunits; this bridge is implicated in subunit movement. Contacts the P site tRNA; the 5S rRNA and some of its associated proteins might help stabilize positioning of ribosome-bound tRNAs. The chain is Large ribosomal subunit protein uL5 from Albidiferax ferrireducens (strain ATCC BAA-621 / DSM 15236 / T118) (Rhodoferax ferrireducens).